Reading from the N-terminus, the 474-residue chain is Mitogen-activated protein kinase pmk-3 (474 aa).

Over residues 1–13 (MASVPSSSSLPVS) the composition is skewed to low complexity. The tract at residues 1 to 90 (MASVPSSSSL…EEEEDILSKP (90 aa)) is disordered. Positions 30–48 (KRSNNQSQPPESYEPNTWL) are enriched in polar residues. Basic and acidic residues predominate over residues 52–69 (REQEQQKKLAAENIKKQS). Residues 114–419 (YDVEPNSIEY…VEEAIQHPYL (306 aa)) enclose the Protein kinase domain. ATP is bound by residues 124 to 132 (LGGGSFGNV) and Lys-150. Asp-252 functions as the Proton acceptor in the catalytic mechanism. Thr-285 is modified (phosphothreonine). The short motif at 285 to 287 (TQY) is the TXY element. Phosphotyrosine is present on Tyr-287.

The protein belongs to the protein kinase superfamily. CMGC Ser/Thr protein kinase family. MAP kinase subfamily. In terms of assembly, interacts with mak-2. May interact with vhp-1. May interact with uev-3. Mg(2+) is required as a cofactor. Dually phosphorylated on Thr-285 and Tyr-287, which activates the enzyme. As to expression, expressed throughout the intestine.

It localises to the nucleus. The protein localises to the cytoplasm. Its subcellular location is the cell projection. It is found in the axon. The protein resides in the dendrite. It localises to the cilium. The catalysed reaction is L-seryl-[protein] + ATP = O-phospho-L-seryl-[protein] + ADP + H(+). It carries out the reaction L-threonyl-[protein] + ATP = O-phospho-L-threonyl-[protein] + ADP + H(+). Its activity is regulated as follows. Activated by phosphorylation on threonine and tyrosine. Responds to activation by environmental stress and pro-inflammatory cytokines by phosphorylating downstream targets. Involved in axon regeneration after injury, probably downstream of dlk-1 and mkk-4 and upstream of mak-2. May phosphorylate mak-2. Plays a role in cilium length regulation, possibly by reducing rab-5 mediated endocytosis. Plays a role in the formation of muscle connections, also called muscle arm extensions, between the body wall and the motor axons in the dorsal and ventral cord. In Caenorhabditis elegans, this protein is Mitogen-activated protein kinase pmk-3 (pmk-3).